We begin with the raw amino-acid sequence, 1714 residues long: Intersectin-1 (1714 aa).

An EH 1 domain is found at 21–109; that stretch reads ERAKHDQQFL…PVMKQQPVAI (89 aa). Residues 53–88 form the EF-hand 1 domain; the sequence is LPQPVLAQIWALADMNNDGRMDQVEFSIAMKLIKLK. Ca(2+)-binding residues include Asp-66, Asn-68, Asp-70, Arg-72, and Glu-77. A Phosphoserine modification is found at Ser-203. Positions 221 to 310 constitute an EH 2 domain; that stretch reads SRLKYRQLFN…PEYIPPSFRR (90 aa). One can recognise an EF-hand 2 domain in the interval 254–289; sequence LPQAQLASIWNLSDIDQDGKLTAEEFILAMHLIDVA. Residues Asp-267, Asp-269, Asp-271, Lys-273, and Glu-278 each contribute to the Ca(2+) site. Over residues 310–325 the composition is skewed to low complexity; that stretch reads RVRSGSGMSVISSSSV. 2 disordered regions span residues 310–356 and 614–706; these read RVRS…KREN and SKQQ…QSRL. 3 positions are modified to phosphoserine: Ser-318, Ser-334, and Ser-335. Residues 326-702 form a KLERQ region; that stretch reads DQRLPEEPSS…ERAKPEMQDK (377 aa). Basic and acidic residues-rich tracts occupy residues 340 to 356 and 622 to 706; these read QPEK…KREN and RSLE…QSRL. A coiled-coil region spans residues 354-658; it reads RENFERGSVE…QRRVQERDKQ (305 aa). Ser-685 is modified (phosphoserine). In terms of domain architecture, SH3 1 spans 738 to 799; the sequence is VKVVYYRALY…PANYAEKIPE (62 aa). Residues 827-863 form a disordered region; it reads APLPVTSSEPSTTPNNWADFSSTWPSSSNEKPETDNW. The segment covering 831 to 855 has biased composition (polar residues); sequence VTSSEPSTTPNNWADFSSTWPSSSN. A Phosphothreonine modification is found at Thr-890. Phosphoserine is present on residues Ser-894, Ser-895, and Ser-897. Residues 906–964 enclose the SH3 2 domain; the sequence is VEGLQAQALYPWRAKKDNHLNFNKSDVITVLEQQDMWWFGEVQGQKGWFPKSYVKLISG. Ser-971 carries the phosphoserine modification. A Phosphothreonine modification is found at Thr-977. A phosphoserine mark is found at Ser-979 and Ser-988. SH3 domains are found at residues 995-1053 and 1067-1131; these read IPGE…LKDS and KKPE…LLSP. Residues 1067–1131 form a required for interaction with FCHSD2 region; it reads KKPEIAQVIA…PANYVKLLSP (65 aa). Positions 1097-1120 match the Bipartite nuclear localization signal; in isoform 2 motif; that stretch reads RKKNPGGWWEGELQARGKKRQIGW. Ser-1130 bears the Phosphoserine mark. Thr-1137 bears the Phosphothreonine mark. The 60-residue stretch at 1148–1207 folds into the SH3 5 domain; it reads PAVCQVIGMYDYTAQNDDELAFSKGQIINVLNKEDPDWWKGEVSGQVGLFPSNYVKLTTD. Positions 1230–1416 constitute a DH domain; it reads KRQGYIHELI…EELCSQVNEG (187 aa). Positions 1455-1564 constitute a PH domain; it reads KFLHSGKLYK…WVQKIKAASE (110 aa). The C2 domain maps to 1572–1688; sequence KKREKAYLVR…KKDQGSKGPV (117 aa). At Ser-1638 the chain carries Phosphoserine. Residues Asp-1660, Ser-1663, and Asp-1666 each contribute to the Ca(2+) site.

Interacts (via DH domain) with CDC42. Interacts (via SH3 domain 1) with WASL. Interacts with dynamin, SNAP25 and SNAP23. Interacts with clathrin-associated proteins and other components of the endocytic machinery, such as SPIN90, EPS15, EPN1, EPN2, STON2, FCHO1, FCHO2 and DAB2. Interacts (via SH3 domains) with REPS1 and SGIP1. Interacts with ARHGAP31. Interacts with ADAM15. Interacts with PRRT2. Interacts (via SH3 domain 4) with FCHSD2 (via SH3 domain 2). Interacts (via SH3 domain 1) with DENND2B. Interacts (via SH3 domains) with CBL. Isoform 2: Interacts with CBL and DNM1. Isoform 2: Interacts with LMNA. Isoform 2: Interacts with importin subunit KPNA1; this is likely to mediate its import into the nucleus. Interacts with DNM2. Ca(2+) is required as a cofactor. As to expression, detected in brain, adrenal gland and heart. Detected in neurons at the calyx of Held (at protein level). Isoform 1: Primarily detected in brain neurons. Isoform 2: Primarily detected in glia (at protein level). Widely expressed. Expressed at high levels in brain, heart and skeletal muscle.

The protein resides in the endomembrane system. The protein localises to the synapse. Its subcellular location is the synaptosome. It localises to the cell projection. It is found in the lamellipodium. The protein resides in the cell membrane. The protein localises to the membrane. Its subcellular location is the clathrin-coated pit. It localises to the recycling endosome. It is found in the endosome. The protein resides in the cytoplasmic vesicle. The protein localises to the cytoplasm. Its subcellular location is the nucleus envelope. Its function is as follows. Adapter protein that provides a link between the endocytic membrane traffic and the actin assembly machinery. Acts as a guanine nucleotide exchange factor (GEF) for CDC42, and thereby stimulates actin nucleation mediated by WASL and the ARP2/3 complex. Plays a role in the assembly and maturation of clathrin-coated vesicles. Recruits FCHSD2 to clathrin-coated pits. Involved in endocytosis of activated EGFR, and probably also other growth factor receptors. Involved in endocytosis of integrin beta-1 (ITGB1) and transferrin receptor (TFR); internalization of ITGB1 as DAB2-dependent cargo but not TFR may involve association with DAB2. Promotes ubiquitination and subsequent degradation of EGFR, and thereby contributes to the down-regulation of EGFR-dependent signaling pathways. In chromaffin cells, required for normal exocytosis of catecholamines. Required for rapid replenishment of release-ready synaptic vesicles at presynaptic active zones. Inhibits ARHGAP31 activity toward RAC1. In terms of biological role, plays a role in synaptic vesicle endocytosis in brain neurons. In Mus musculus (Mouse), this protein is Intersectin-1.